Reading from the N-terminus, the 296-residue chain is Probable redox regulatory protein BQ2027_MB0506C (296 aa).

It belongs to the Rv0495c family.

In terms of biological role, essential for maintaining intracellular redox homeostasis. The sequence is that of Probable redox regulatory protein BQ2027_MB0506C from Mycobacterium bovis (strain ATCC BAA-935 / AF2122/97).